The chain runs to 859 residues: Protein SEY1 (859 aa).

Topologically, residues M1 to Q742 are cytoplasmic. In terms of domain architecture, GB1/RHD3-type G spans G49–P291. G59–S66 contributes to the GTP binding site. A coiled-coil region spans residues F476–K496. Positions L525–E544 are disordered. A helical membrane pass occupies residues V743–L763. Residues R764–P766 lie on the Lumenal side of the membrane. Residues V767–L787 traverse the membrane as a helical segment. The Cytoplasmic segment spans residues W788–I859. The segment at S816 to I859 is disordered. Residues D850–I859 are compositionally biased toward acidic residues.

The protein belongs to the TRAFAC class dynamin-like GTPase superfamily. GB1/RHD3 GTPase family. RHD3 subfamily.

The protein resides in the endoplasmic reticulum membrane. Cooperates with the reticulon proteins and tubule-shaping DP1 family proteins to generate and maintain the structure of the tubular endoplasmic reticulum network. Has GTPase activity, which is required for its function in ER organization. The sequence is that of Protein SEY1 from Phaeosphaeria nodorum (strain SN15 / ATCC MYA-4574 / FGSC 10173) (Glume blotch fungus).